A 427-amino-acid chain; its full sequence is Serine--tRNA ligase (427 aa).

Residue 235–237 (TAE) participates in L-serine binding. ATP-binding positions include 266-268 (RRE) and valine 282. An L-serine-binding site is contributed by glutamate 289. 353 to 356 (EASS) provides a ligand contact to ATP. Residue serine 389 coordinates L-serine.

It belongs to the class-II aminoacyl-tRNA synthetase family. Type-1 seryl-tRNA synthetase subfamily. Homodimer. The tRNA molecule binds across the dimer.

The protein localises to the cytoplasm. The catalysed reaction is tRNA(Ser) + L-serine + ATP = L-seryl-tRNA(Ser) + AMP + diphosphate + H(+). It carries out the reaction tRNA(Sec) + L-serine + ATP = L-seryl-tRNA(Sec) + AMP + diphosphate + H(+). It participates in aminoacyl-tRNA biosynthesis; selenocysteinyl-tRNA(Sec) biosynthesis; L-seryl-tRNA(Sec) from L-serine and tRNA(Sec): step 1/1. Catalyzes the attachment of serine to tRNA(Ser). Is also able to aminoacylate tRNA(Sec) with serine, to form the misacylated tRNA L-seryl-tRNA(Sec), which will be further converted into selenocysteinyl-tRNA(Sec). This is Serine--tRNA ligase from Chlorobium phaeobacteroides (strain BS1).